The chain runs to 543 residues: Chaperonin GroEL 4 (543 aa).

Residues 29–32, 86–90, Gly411, 476–478, and Asp492 each bind ATP; these read TLGP, DGTTT, and DAA.

This sequence belongs to the chaperonin (HSP60) family. As to quaternary structure, forms a cylinder of 14 subunits composed of two heptameric rings stacked back-to-back. Interacts with the co-chaperonin GroES.

It is found in the cytoplasm. It catalyses the reaction ATP + H2O + a folded polypeptide = ADP + phosphate + an unfolded polypeptide.. Together with its co-chaperonin GroES, plays an essential role in assisting protein folding. The GroEL-GroES system forms a nano-cage that allows encapsulation of the non-native substrate proteins and provides a physical environment optimized to promote and accelerate protein folding. The chain is Chaperonin GroEL 4 from Bradyrhizobium diazoefficiens (strain JCM 10833 / BCRC 13528 / IAM 13628 / NBRC 14792 / USDA 110).